Reading from the N-terminus, the 62-residue chain is Photosystem II reaction center protein Z (62 aa).

A run of 2 helical transmembrane segments spans residues 8 to 28 and 41 to 61; these read AVFA…VVFA and FSGT…NSLI.

It belongs to the PsbZ family. As to quaternary structure, PSII is composed of 1 copy each of membrane proteins PsbA, PsbB, PsbC, PsbD, PsbE, PsbF, PsbH, PsbI, PsbJ, PsbK, PsbL, PsbM, PsbT, PsbY, PsbZ, Psb30/Ycf12, at least 3 peripheral proteins of the oxygen-evolving complex and a large number of cofactors. It forms dimeric complexes.

It localises to the plastid. Its subcellular location is the chloroplast thylakoid membrane. May control the interaction of photosystem II (PSII) cores with the light-harvesting antenna, regulates electron flow through the 2 photosystem reaction centers. PSII is a light-driven water plastoquinone oxidoreductase, using light energy to abstract electrons from H(2)O, generating a proton gradient subsequently used for ATP formation. The polypeptide is Photosystem II reaction center protein Z (Spinacia oleracea (Spinach)).